The sequence spans 428 residues: UDP-N-acetylglucosamine 1-carboxyvinyltransferase (428 aa).

25 to 26 provides a ligand contact to phosphoenolpyruvate; it reads KN. Residue R102 participates in UDP-N-acetyl-alpha-D-glucosamine binding. C126 acts as the Proton donor in catalysis. Position 126 is a 2-(S-cysteinyl)pyruvic acid O-phosphothioketal (C126). 2 residues coordinate UDP-N-acetyl-alpha-D-glucosamine: D316 and V338.

This sequence belongs to the EPSP synthase family. MurA subfamily.

The protein resides in the cytoplasm. The catalysed reaction is phosphoenolpyruvate + UDP-N-acetyl-alpha-D-glucosamine = UDP-N-acetyl-3-O-(1-carboxyvinyl)-alpha-D-glucosamine + phosphate. It functions in the pathway cell wall biogenesis; peptidoglycan biosynthesis. In terms of biological role, cell wall formation. Adds enolpyruvyl to UDP-N-acetylglucosamine. The polypeptide is UDP-N-acetylglucosamine 1-carboxyvinyltransferase (Anaplasma marginale (strain Florida)).